The sequence spans 555 residues: La-related protein 7 (555 aa).

The region spanning 36 to 127 is the HTH La-type RNA-binding domain; the sequence is RSRVKQLLSD…RRKEPLGETP (92 aa). The 79-residue stretch at 133-211 folds into the RRM domain; that stretch reads RTVYVELLPK…PRKPGIFPKT (79 aa). The interval 218–327 is disordered; sequence PFDAVTQDND…ENKDEELNSL (110 aa). Composition is skewed to polar residues over residues 238–251, 258–274, and 284–293; these read KNSTSEETGSNNMD, STVTSEPNLATLTSTVS, and SQSFEASSGE. Residues 295–356 adopt a coiled-coil conformation; sequence QFEMSSKMRK…ERLKVGEEVI (62 aa). Residues 303–327 show a composition bias toward basic and acidic residues; the sequence is RKVEEEKSELKDLSSENKDEELNSL. In terms of domain architecture, xRRM spans 425–538; the sequence is EFLSGVIVKI…TEKLISKAEK (114 aa).

The protein belongs to the LARP7 family. Core component of the 7SK RNP complex. Associates with box C/D small nucleolar ribonucleoprotein (snoRNP) complexes.

The protein localises to the nucleus. It localises to the nucleoplasm. In terms of biological role, RNA-binding protein that specifically binds distinct small nuclear RNA (snRNAs) and regulates their processing and function. Specifically binds the 7SK snRNA (7SK RNA) and acts as a core component of the 7SK ribonucleoprotein (RNP) complex, thereby acting as a negative regulator of transcription elongation by RNA polymerase II. The 7SK RNP complex sequesters the positive transcription elongation factor b (P-TEFb) in a large inactive 7SK RNP complex preventing RNA polymerase II phosphorylation and subsequent transcriptional elongation. The 7SK RNP complex also promotes snRNA gene transcription by RNA polymerase II via interaction with the little elongation complex (LEC). LARP7 specifically binds to the highly conserved 3'-terminal U-rich stretch of 7SK RNA; on stimulation, remains associated with 7SK RNA, whereas P-TEFb is released from the complex. LARP7 also acts as a regulator of mRNA splicing fidelity by promoting U6 snRNA processing. Specifically binds U6 snRNAs and associates with a subset of box C/D RNP complexes: promotes U6 snRNA 2'-O-methylation by facilitating U6 snRNA loading into box C/D RNP complexes. U6 snRNA 2'-O-methylation is required for mRNA splicing fidelity. In Danio rerio (Zebrafish), this protein is La-related protein 7.